A 179-amino-acid chain; its full sequence is Translation initiation factor IF-3 (179 aa).

The protein belongs to the IF-3 family. In terms of assembly, monomer.

Its subcellular location is the cytoplasm. Its function is as follows. IF-3 binds to the 30S ribosomal subunit and shifts the equilibrium between 70S ribosomes and their 50S and 30S subunits in favor of the free subunits, thus enhancing the availability of 30S subunits on which protein synthesis initiation begins. The sequence is that of Translation initiation factor IF-3 from Leptospira borgpetersenii serovar Hardjo-bovis (strain L550).